The following is a 392-amino-acid chain: Alkaline phosphatase L (392 aa).

An N-terminal signal peptide occupies residues methionine 1–alanine 23.

It belongs to the PstS family. In terms of assembly, homodimer.

Its subcellular location is the secreted. It localises to the periplasm. The enzyme catalyses a phosphate monoester + H2O = an alcohol + phosphate. Has both a phosphomonoesterase and phosphodiesterase activity. The protein is Alkaline phosphatase L of Pseudomonas aeruginosa (strain UCBPP-PA14).